We begin with the raw amino-acid sequence, 178 residues long: Large ribosomal subunit protein uL6 (178 aa).

This sequence belongs to the universal ribosomal protein uL6 family. Part of the 50S ribosomal subunit.

Functionally, this protein binds to the 23S rRNA, and is important in its secondary structure. It is located near the subunit interface in the base of the L7/L12 stalk, and near the tRNA binding site of the peptidyltransferase center. The sequence is that of Large ribosomal subunit protein uL6 from Listeria monocytogenes serotype 4a (strain HCC23).